The sequence spans 182 residues: Adenine phosphoribosyltransferase (182 aa).

The protein belongs to the purine/pyrimidine phosphoribosyltransferase family. In terms of assembly, homodimer.

It localises to the cytoplasm. The catalysed reaction is AMP + diphosphate = 5-phospho-alpha-D-ribose 1-diphosphate + adenine. The protein operates within purine metabolism; AMP biosynthesis via salvage pathway; AMP from adenine: step 1/1. In terms of biological role, catalyzes a salvage reaction resulting in the formation of AMP, that is energically less costly than de novo synthesis. The sequence is that of Adenine phosphoribosyltransferase from Bordetella pertussis (strain Tohama I / ATCC BAA-589 / NCTC 13251).